Consider the following 211-residue polypeptide: Interleukin-6 (211 aa).

The signal sequence occupies residues 1 to 29 (MNSLSTSAFSPVAFSLGLLLVMATAFPTP). Cys71 and Cys77 are joined by a disulfide. Ser80 is subject to Phosphoserine. Cys100 and Cys110 are disulfide-bonded.

Belongs to the IL-6 superfamily. As to quaternary structure, component of a hexamer of two molecules each of IL6, IL6R and IL6ST; first binds to IL6R to associate with the signaling subunit IL6ST. Interacts with IL6R (via the N-terminal ectodomain); this interaction may be affected by IL6R-binding with SORL1, hence decreasing IL6 cis signaling. Interacts with SORL1 (via the N-terminal ectodomain); this interaction leads to IL6 internalization and lysosomal degradation. May form a trimeric complex with the soluble SORL1 ectodomain and soluble IL6R receptor; this interaction might stabilize circulating IL6, hence promoting IL6 trans signaling.

The protein localises to the secreted. Its function is as follows. Cytokine with a wide variety of biological functions in immunity, tissue regeneration, and metabolism. Binds to IL6R, then the complex associates to the signaling subunit IL6ST/gp130 to trigger the intracellular IL6-signaling pathway. The interaction with the membrane-bound IL6R and IL6ST stimulates 'classic signaling', whereas the binding of IL6 and soluble IL6R to IL6ST stimulates 'trans-signaling'. Alternatively, 'cluster signaling' occurs when membrane-bound IL6:IL6R complexes on transmitter cells activate IL6ST receptors on neighboring receiver cells. IL6 is a potent inducer of the acute phase response. Rapid production of IL6 contributes to host defense during infection and tissue injury, but excessive IL6 synthesis is involved in disease pathology. In the innate immune response, is synthesized by myeloid cells, such as macrophages and dendritic cells, upon recognition of pathogens through toll-like receptors (TLRs) at the site of infection or tissue injury. In the adaptive immune response, is required for the differentiation of B cells into immunoglobulin-secreting cells. Plays a major role in the differentiation of CD4(+) T cell subsets. Essential factor for the development of T follicular helper (Tfh) cells that are required for the induction of germinal-center formation. Required to drive naive CD4(+) T cells to the Th17 lineage. Also required for proliferation of myeloma cells and the survival of plasmablast cells. Functionally, acts as an essential factor in bone homeostasis and on vessels directly or indirectly by induction of VEGF, resulting in increased angiogenesis activity and vascular permeability. Induces, through 'trans-signaling' and synergistically with IL1B and TNF, the production of VEGF. Involved in metabolic controls, is discharged into the bloodstream after muscle contraction increasing lipolysis and improving insulin resistance. 'Trans-signaling' in central nervous system also regulates energy and glucose homeostasis. Mediates, through GLP-1, crosstalk between insulin-sensitive tissues, intestinal L cells and pancreatic islets to adapt to changes in insulin demand. Also acts as a myokine. Plays a protective role during liver injury, being required for maintenance of tissue regeneration. Also has a pivotal role in iron metabolism by regulating HAMP/hepcidin expression upon inflammation or bacterial infection. Through activation of IL6ST-YAP-NOTCH pathway, induces inflammation-induced epithelial regeneration. This Camelus bactrianus (Bactrian camel) protein is Interleukin-6 (IL6).